Here is a 587-residue protein sequence, read N- to C-terminus: MAQDVKTQLTALLQQALASVAPAATDTPIHLERPRDPTHGDFATNLAMQLAKALKKNPREIANQLLAELPPSRLVTKAEVAGAGFINFTLDAGFKTDVVKAVLAEGDNFGRSNQGGWQKVQVEFVSANPTGPLHVGHGRGAAYGASLSSLLTFAGWDVTREYYVNDAGRQMDILGLSTWLRYLEQHGVDVPFLPNAYQGDYVRDMAKQMTVAHGDKFVRPAADVLAGTPGLPEAERADDEAKRQRDLHLDALIANAKVLLGPDWTYVHQHALSEQLADGRDDLEEFGVHFDVWFSEQALFDTGLVARCVDLLEKNGHLYVQNGARWFKSTTFGDEKDRVVQRENGLYTYFASDIAYHLNKFERGFDKVINIWGADHHGYIARVNGAITALGLDASKLQVALVQFAVLYRNGQKASMSTRSGEFVTLRELRGEVGNDACRFFYALRKSDQHLDFDLDLAKSQTNENPVYYIQYAHARVCSVINQWGGDLATLADANLALLDNPRELAIASKLAEFRDVIDGAARELAPHLIAFYLKDLAGEFHGWYNAERMLVDDAALRDARVALAAAVRQTIRNGMTILGVSCPDSM.

Positions 127–137 (ANPTGPLHVGH) match the 'HIGH' region motif.

Belongs to the class-I aminoacyl-tRNA synthetase family. In terms of assembly, monomer.

It localises to the cytoplasm. It catalyses the reaction tRNA(Arg) + L-arginine + ATP = L-arginyl-tRNA(Arg) + AMP + diphosphate. The protein is Arginine--tRNA ligase of Dechloromonas aromatica (strain RCB).